Consider the following 477-residue polypeptide: NADH-quinone oxidoreductase subunit N (477 aa).

13 consecutive transmembrane segments (helical) span residues 7–27 (VLAH…LILI), 37–57 (GPMT…LVLG), 77–97 (FMKV…QTYL), 109–129 (ILIL…GLIA), 162–182 (FVLG…IYGF), 201–221 (LGVV…MSTV), 233–253 (GAPT…AIAI), 272–292 (IIVF…IGQT), 297–317 (LMAY…AAGT), 323–343 (GVLA…AAIL), 369–389 (AFFL…AGFF), 402–424 (HLYP…YLRI), and 446–466 (AVLI…GSFV).

The protein belongs to the complex I subunit 2 family. As to quaternary structure, NDH-1 is composed of 14 different subunits. Subunits NuoA, H, J, K, L, M, N constitute the membrane sector of the complex.

Its subcellular location is the cell inner membrane. The catalysed reaction is a quinone + NADH + 5 H(+)(in) = a quinol + NAD(+) + 4 H(+)(out). Functionally, NDH-1 shuttles electrons from NADH, via FMN and iron-sulfur (Fe-S) centers, to quinones in the respiratory chain. The immediate electron acceptor for the enzyme in this species is believed to be ubiquinone. Couples the redox reaction to proton translocation (for every two electrons transferred, four hydrogen ions are translocated across the cytoplasmic membrane), and thus conserves the redox energy in a proton gradient. In Beijerinckia indica subsp. indica (strain ATCC 9039 / DSM 1715 / NCIMB 8712), this protein is NADH-quinone oxidoreductase subunit N.